A 272-amino-acid polypeptide reads, in one-letter code: MQLRITSRKKLTALLCALGLISIVAIYPRQTVNFFYSTAVQITDYIHFYGYRPVKSFAIHIPASYTIHGIDVSRWQERIDWQRVAKMRDNGIRLQFAFIKATEGEKLVDPYFSRNWQLSRENGLLRGAYHYFSPSVAAPVQARLFLQTVDFSQGDFPAVLDVEERGKLSAKELRKRVSQWLKMVEKSTGKKPVIYSGAVFYHTNLAGYFNEYPWWVAHYYQRRPDNDGMAWRFWQHSDRGQVDGINGSVDFNVFNGTEEELQAFVDGIKETP.

The active site involves Glu-163.

The protein belongs to the glycosyl hydrolase 25 family.

This is an uncharacterized protein from Escherichia coli O157:H7.